Reading from the N-terminus, the 185-residue chain is Translation initiation factor IF-3 (185 aa).

It belongs to the IF-3 family. In terms of assembly, monomer.

It is found in the cytoplasm. Its function is as follows. IF-3 binds to the 30S ribosomal subunit and shifts the equilibrium between 70S ribosomes and their 50S and 30S subunits in favor of the free subunits, thus enhancing the availability of 30S subunits on which protein synthesis initiation begins. In Rickettsia prowazekii (strain Madrid E), this protein is Translation initiation factor IF-3.